The primary structure comprises 540 residues: Fumonisin B1 esterase (540 aa).

Residue S240 is the Acyl-ester intermediate of the active site. Residues E356 and H448 each act as charge relay system in the active site. A disordered region spans residues 521 to 540; sequence QVGSGEGLGVSPSKACQPSK.

This sequence belongs to the type-B carboxylesterase/lipase family.

The enzyme catalyses fumonisin B1 + 2 H2O = 2 tricarballylate + (2S,3S,5R,10R,12S,14S,15R,16R)-2-amino-12,16-dimethylicosane-3,5,10,14,15-pentol + 2 H(+). Functionally, involved in degradation of fumonisin B1. Catalyzes the hydrolysis of fumonisin B1 (FB1) to aminopentol (HFB1). In Sphingopyxis macrogoltabida (Sphingomonas macrogoltabidus), this protein is Fumonisin B1 esterase (fumD).